The primary structure comprises 682 residues: K(+)-insensitive pyrophosphate-energized proton pump 2 (682 aa).

Helical transmembrane passes span 1–21, 56–76, 78–98, 130–150, and 160–180; these read MELFPIIPAGGILALLVALYM, TIAGLALIVAVLLALLTRQYH, AVAFITGAFASALSGYIGMYV, LAVTALSLLGVTSLFYAFGGA, and IVGFGFGASFVALFAQLSGGI. Lys183 provides a ligand contact to substrate. 3 residues coordinate Mg(2+): Asp186, Asp190, and Asp216. 7 consecutive transmembrane segments (helical) span residues 237–257, 258–278, 291–311, 318–338, 353–373, 375–395, and 404–424; these read IGAMILGIALVPFFGVKGIVF, PLVARAAGIIASIIGMFFVRA, GYIVTSILAIIFLYPISRYML, FIYFYGAGIIGIVLSFIFVLI, IARASITGPATNIISGVAVGF, STALPVVFISLAILGAYWLGL, and LYGTAVATMGMLSTAAYILAM. Position 432 (Asp432) interacts with Mg(2+). The next 4 helical transmembrane spans lie at 468-488, 506-526, 574-594, and 595-615; these read YAIGSAALATFLLFSAYIDEV, EVFVGAFIAAMMVLLFSSTAI, MVLPGLIVVITPIIVGLVLKA, and EAAAAFLMVGTITGVIVALFL. 3 residues coordinate Ca(2+): Asp623, Asp649, and Asp653. Residue Lys656 participates in substrate binding. The chain crosses the membrane as a helical span at residues 662 to 682; sequence SLHVLVKLISTITLVLAGLFI.

It belongs to the H(+)-translocating pyrophosphatase (TC 3.A.10) family. K(+)-insensitive subfamily. As to quaternary structure, homodimer. Requires Mg(2+) as cofactor.

Its subcellular location is the cell membrane. The catalysed reaction is diphosphate + H2O + H(+)(in) = 2 phosphate + 2 H(+)(out). Functionally, proton pump that utilizes the energy of pyrophosphate hydrolysis as the driving force for proton movement across the membrane. Generates a proton motive force. The sequence is that of K(+)-insensitive pyrophosphate-energized proton pump 2 from Moorella thermoacetica (strain ATCC 39073 / JCM 9320).